We begin with the raw amino-acid sequence, 324 residues long: Methyltransferase pytC (324 aa).

It belongs to the methyltransferase superfamily. LaeA methyltransferase family.

It functions in the pathway secondary metabolite biosynthesis. Its function is as follows. Methyltransferase; part of the gene cluster that mediates the biosynthesis of pyranterreones, a family of antioxidative compounds. The first step of pyranonigrins biosynthesis is performed by the hybrid PKS-NRPS synthetase pytA that condenses 4 malonyl-CoA units ato the acetyl starter unit by the modular PKS of pytA. The acyl chain is then connected to an L-serine through the amide bond by the modular NRPS of pytA. A tetramic acid is formed and released from the PKS-NRPS pytA to give pyranterreone 5 with the help of the thioesterase pytI. Pyranterreone 5 could be methylated by pytC to afford pyranterreone 6. Both pyranterreones 5 and 6 are subsequently oxidized by the FAD-linked oxidoreductase pytB and the cytochrome P450 monooxygenase pytD to form the fused gamma-pyrone core, resulting in pyranterreones 7 and 11, respectively. The hydroxy group at C-8 of pyranterreones 7 and 11 are dehydrated by the aspartyl protease pytH to form a delta-7 double bond to give pyranterreones 3 and 1, 2 accordingly. The exo-methylene of pyranterreone 3 could be reduced into a pendant methyl by reductase pytE to provide pyranterreone 4, also known as cordylactam. Pyranterreone 4 can be reconverted to pyranterreone 3 through pytB-catalyzed dehydrogenation or further oxidized to pyranterreones 9 and 10. The sequence is that of Methyltransferase pytC from Aspergillus terreus (strain NIH 2624 / FGSC A1156).